We begin with the raw amino-acid sequence, 417 residues long: UDP-N-acetylglucosamine 1-carboxyvinyltransferase (417 aa).

22-23 (KN) serves as a coordination point for phosphoenolpyruvate. Residue R93 participates in UDP-N-acetyl-alpha-D-glucosamine binding. The active-site Proton donor is C117. C117 carries the 2-(S-cysteinyl)pyruvic acid O-phosphothioketal modification. UDP-N-acetyl-alpha-D-glucosamine-binding positions include 122-126 (RPVDQ), D305, and I327.

This sequence belongs to the EPSP synthase family. MurA subfamily.

Its subcellular location is the cytoplasm. It catalyses the reaction phosphoenolpyruvate + UDP-N-acetyl-alpha-D-glucosamine = UDP-N-acetyl-3-O-(1-carboxyvinyl)-alpha-D-glucosamine + phosphate. The protein operates within cell wall biogenesis; peptidoglycan biosynthesis. In terms of biological role, cell wall formation. Adds enolpyruvyl to UDP-N-acetylglucosamine. This Dechloromonas aromatica (strain RCB) protein is UDP-N-acetylglucosamine 1-carboxyvinyltransferase.